Consider the following 186-residue polypeptide: Putative adenylate kinase (186 aa).

ATP is bound by residues G10, G12, K13, T14, and S15. Residues 30-53 (HLNELIKEEHLYTEVDEKRDSVVA) are NMP. The tract at residues 108–118 (KRGYSEEKVNE) is LID. An ATP-binding site is contributed by R109.

It belongs to the adenylate kinase family. AK6 subfamily. As to quaternary structure, interacts with uS11. Not a structural component of 40S pre-ribosomes, but transiently interacts with them by binding to uS11.

The enzyme catalyses AMP + ATP = 2 ADP. The catalysed reaction is ATP + H2O = ADP + phosphate + H(+). Broad-specificity nucleoside monophosphate (NMP) kinase that catalyzes the reversible transfer of the terminal phosphate group between nucleoside triphosphates and monophosphates. Also has ATPase activity. Involved in the late maturation steps of the 30S ribosomal particles, specifically 16S rRNA maturation. While NMP activity is not required for ribosome maturation, ATPase activity is. Associates transiently with small ribosomal subunit protein uS11. ATP hydrolysis breaks the interaction with uS11. May temporarily remove uS11 from the ribosome to enable a conformational change of the ribosomal RNA that is needed for the final maturation step of the small ribosomal subunit. The protein is Putative adenylate kinase of Methanosarcina acetivorans (strain ATCC 35395 / DSM 2834 / JCM 12185 / C2A).